Consider the following 794-residue polypeptide: DNA ligase (794 aa).

The tract at residues 1–47 (MEEDLFSLAAGKQPSQQATNETAPRAGEARENAGTDHPGNAEDPAHR) is disordered. Over residues 13–22 (QPSQQATNET) the composition is skewed to polar residues. Positions 27–47 (GEARENAGTDHPGNAEDPAHR) are enriched in basic and acidic residues. Residues 73–77 (DAEYD), 122–123 (SI), and Glu160 each bind NAD(+). Residue Lys162 is the N6-AMP-lysine intermediate of the active site. Arg183, Glu219, Lys335, and Lys359 together coordinate NAD(+). Positions 457, 460, 475, and 480 each coordinate Zn(2+). A BRCT domain is found at 717–794 (IPAGSLSGKT…EEDFYKMIGN (78 aa)).

The protein belongs to the NAD-dependent DNA ligase family. LigA subfamily. It depends on Mg(2+) as a cofactor. The cofactor is Mn(2+).

It carries out the reaction NAD(+) + (deoxyribonucleotide)n-3'-hydroxyl + 5'-phospho-(deoxyribonucleotide)m = (deoxyribonucleotide)n+m + AMP + beta-nicotinamide D-nucleotide.. Its function is as follows. DNA ligase that catalyzes the formation of phosphodiester linkages between 5'-phosphoryl and 3'-hydroxyl groups in double-stranded DNA using NAD as a coenzyme and as the energy source for the reaction. It is essential for DNA replication and repair of damaged DNA. This is DNA ligase from Akkermansia muciniphila (strain ATCC BAA-835 / DSM 22959 / JCM 33894 / BCRC 81048 / CCUG 64013 / CIP 107961 / Muc).